The primary structure comprises 304 residues: UDP-N-acetylenolpyruvoylglucosamine reductase (304 aa).

Residues 31–196 (KVGGPADYLA…ISAKFNLKPG (166 aa)) form the FAD-binding PCMH-type domain. The active site involves Arg-175. Catalysis depends on Ser-225, which acts as the Proton donor. Glu-295 is a catalytic residue.

This sequence belongs to the MurB family. FAD is required as a cofactor.

Its subcellular location is the cytoplasm. The enzyme catalyses UDP-N-acetyl-alpha-D-muramate + NADP(+) = UDP-N-acetyl-3-O-(1-carboxyvinyl)-alpha-D-glucosamine + NADPH + H(+). It functions in the pathway cell wall biogenesis; peptidoglycan biosynthesis. Functionally, cell wall formation. This Streptococcus thermophilus (strain ATCC BAA-491 / LMD-9) protein is UDP-N-acetylenolpyruvoylglucosamine reductase.